A 202-amino-acid chain; its full sequence is MIGRLSGTLLEKHPPQILVDAGGVGYEVDVPMSTFCRLPGLNEPVVLWTHMAVREDAHLLFGFAGRAERELFRQLIRISGVGGKLALALLSSLEPDELARAVAQEDIKTLSRVPGIGKKTAERLILELRGKLGSLPSADLLSPAPAAGAALLVENDERADISQALQALGYSAREAEAALKSVPDGTDVATGIRLALKALARP.

The interval 1-64 is domain I; sequence MIGRLSGTLL…EDAHLLFGFA (64 aa). Residues 65-143 are domain II; it reads GRAERELFRQ…SLPSADLLSP (79 aa). Residues 144–152 form a flexible linker region; sequence APAAGAALL. Residues 153 to 202 are domain III; the sequence is VENDERADISQALQALGYSAREAEAALKSVPDGTDVATGIRLALKALARP.

It belongs to the RuvA family. Homotetramer. Forms an RuvA(8)-RuvB(12)-Holliday junction (HJ) complex. HJ DNA is sandwiched between 2 RuvA tetramers; dsDNA enters through RuvA and exits via RuvB. An RuvB hexamer assembles on each DNA strand where it exits the tetramer. Each RuvB hexamer is contacted by two RuvA subunits (via domain III) on 2 adjacent RuvB subunits; this complex drives branch migration. In the full resolvosome a probable DNA-RuvA(4)-RuvB(12)-RuvC(2) complex forms which resolves the HJ.

It localises to the cytoplasm. Functionally, the RuvA-RuvB-RuvC complex processes Holliday junction (HJ) DNA during genetic recombination and DNA repair, while the RuvA-RuvB complex plays an important role in the rescue of blocked DNA replication forks via replication fork reversal (RFR). RuvA specifically binds to HJ cruciform DNA, conferring on it an open structure. The RuvB hexamer acts as an ATP-dependent pump, pulling dsDNA into and through the RuvAB complex. HJ branch migration allows RuvC to scan DNA until it finds its consensus sequence, where it cleaves and resolves the cruciform DNA. This chain is Holliday junction branch migration complex subunit RuvA, found in Laribacter hongkongensis (strain HLHK9).